A 146-amino-acid chain; its full sequence is UPF0742 protein C1348.03 (146 aa).

The helical transmembrane segment at 38–60 threads the bilayer; that stretch reads LTVKYCLAVKLLIYLLYCWYIYS.

This sequence belongs to the UPF0742 family.

It is found in the cytoplasm. The protein localises to the nucleus membrane. This Schizosaccharomyces pombe (strain 972 / ATCC 24843) (Fission yeast) protein is UPF0742 protein C1348.03.